Here is a 149-residue protein sequence, read N- to C-terminus: Arginine repressor (149 aa).

It belongs to the ArgR family.

It localises to the cytoplasm. It functions in the pathway amino-acid biosynthesis; L-arginine biosynthesis [regulation]. Its function is as follows. Regulates arginine biosynthesis genes. The chain is Arginine repressor from Exiguobacterium sp. (strain ATCC BAA-1283 / AT1b).